Consider the following 601-residue polypeptide: CDPK-related kinase 5 (601 aa).

A compositionally biased stretch (polar residues) spans 1–19 (MGLCTSKPNSSNSDQTPAR). 2 disordered regions span residues 1 to 55 (MGLC…KSPF) and 70 to 98 (KKTP…PPPS). G2 is lipidated: N-myristoyl glycine. A compositionally biased stretch (low complexity) spans 26–35 (SESVKPSSSS). Over residues 36-48 (VNGEDQCVTTTNN) the composition is skewed to polar residues. In terms of domain architecture, Protein kinase spans 148 to 410 (YELGDEVGRG…AAQALSHPWI (263 aa)). ATP is bound by residues 154-162 (VGRGHFGYT) and K180. D276 functions as the Proton acceptor in the catalytic mechanism. S316 is modified (phosphoserine). Residues 415-445 (DAKVPMDILVFKLMRAYLRSSSLRKAALRAL) form an autoinhibitory domain region. The tract at residues 434 to 454 (SSSLRKAALRALSKTLTVDEL) is calmodulin binding (CaMBD). 4 consecutive EF-hand domains span residues 452–488 (DELF…ATDA), 489–524 (MKDS…VHQL), 525–564 (EALD…GPSV), and 567–596 (HAVL…VSSR). 10 residues coordinate Ca(2+): S467, N469, T471, N476, R508, E513, N546, E553, D578, and K580. S582 carries the post-translational modification Phosphoserine.

It belongs to the protein kinase superfamily. Ser/Thr protein kinase family. CDPK subfamily. As to quaternary structure, binds calmodulin (CaM) in a calcium-dependent manner.

It is found in the membrane. The enzyme catalyses L-seryl-[protein] + ATP = O-phospho-L-seryl-[protein] + ADP + H(+). It carries out the reaction L-threonyl-[protein] + ATP = O-phospho-L-threonyl-[protein] + ADP + H(+). Activated by calcium and calmodulin. Autophosphorylation may play an important role in the regulation of the kinase activity. In terms of biological role, may play a role in signal transduction pathways that involve calcium as a second messenger. The sequence is that of CDPK-related kinase 5 (CRK5) from Arabidopsis thaliana (Mouse-ear cress).